A 108-amino-acid chain; its full sequence is MYAVIRTGGKQYRVAPGDVLKIETAAANQDGQIEFSEVLAFSGETGSVVKPGAAKVLASVEGEGRGDKILVFHYKRKKQYKKLQGHRQNFTQIRIQEIQIDGNSYRAQ.

Belongs to the bacterial ribosomal protein bL21 family. Part of the 50S ribosomal subunit. Contacts protein L20.

Its function is as follows. This protein binds to 23S rRNA in the presence of protein L20. This chain is Large ribosomal subunit protein bL21, found in Acidobacterium capsulatum (strain ATCC 51196 / DSM 11244 / BCRC 80197 / JCM 7670 / NBRC 15755 / NCIMB 13165 / 161).